Here is a 371-residue protein sequence, read N- to C-terminus: MYLSRLELTDFRSYRRAALELDPGVNVFVGSNGQGKTNLVEAVCYLALLRSHRTATDAPLVRQGSERAVLHGEVLTSGRRIDLDVEIVPGRANRLRVNGHATRRARDLVGILRVVIFAPEDLALVKGDPAARRDYLDDVLVELRPRLFAVRAEYEKALRQRNAFLRAVAQDGQQVDRNSLDVWNLHFARAAAALLDARRRLVHELAPFVEKAYAAISGGSGAVRLEYRSTVPEEVLQDADEETRIAGILAALRKVQDAELARGLTLVGPHRDDLNLELDSRPARGYASHGESWSYALALRLGAYELLRSDGETPVMILDDVYAELDQQRRRRLTGCVSGAEQLLITSAVDEPDLPVGRRYVVHESQVHVAD.

ATP is bound at residue 30–37 (GSNGQGKT).

This sequence belongs to the RecF family.

It is found in the cytoplasm. Functionally, the RecF protein is involved in DNA metabolism; it is required for DNA replication and normal SOS inducibility. RecF binds preferentially to single-stranded, linear DNA. It also seems to bind ATP. The chain is DNA replication and repair protein RecF from Acidothermus cellulolyticus (strain ATCC 43068 / DSM 8971 / 11B).